A 272-amino-acid polypeptide reads, in one-letter code: S-adenosylmethionine decarboxylase proenzyme (272 aa).

Serine 122 (schiff-base intermediate with substrate; via pyruvic acid) is an active-site residue. Serine 122 bears the Pyruvic acid (Ser); by autocatalysis mark. Histidine 127 functions as the Proton acceptor; for processing activity in the catalytic mechanism. Cysteine 150 functions as the Proton donor; for catalytic activity in the catalytic mechanism.

Belongs to the prokaryotic AdoMetDC family. Type 2 subfamily. In terms of assembly, heterooctamer of four alpha and four beta chains arranged as a tetramer of alpha/beta heterodimers. It depends on pyruvate as a cofactor. Post-translationally, is synthesized initially as an inactive proenzyme. Formation of the active enzyme involves a self-maturation process in which the active site pyruvoyl group is generated from an internal serine residue via an autocatalytic post-translational modification. Two non-identical subunits are generated from the proenzyme in this reaction, and the pyruvate is formed at the N-terminus of the alpha chain, which is derived from the carboxyl end of the proenzyme. The post-translation cleavage follows an unusual pathway, termed non-hydrolytic serinolysis, in which the side chain hydroxyl group of the serine supplies its oxygen atom to form the C-terminus of the beta chain, while the remainder of the serine residue undergoes an oxidative deamination to produce ammonia and the pyruvoyl group blocking the N-terminus of the alpha chain.

It catalyses the reaction S-adenosyl-L-methionine + H(+) = S-adenosyl 3-(methylsulfanyl)propylamine + CO2. The protein operates within amine and polyamine biosynthesis; S-adenosylmethioninamine biosynthesis; S-adenosylmethioninamine from S-adenosyl-L-methionine: step 1/1. Catalyzes the decarboxylation of S-adenosylmethionine to S-adenosylmethioninamine (dcAdoMet), the propylamine donor required for the synthesis of the polyamines spermine and spermidine from the diamine putrescine. The protein is S-adenosylmethionine decarboxylase proenzyme of Clostridium botulinum (strain Alaska E43 / Type E3).